The following is a 55-amino-acid chain: Male-specific sperm protein Mst84Dc (55 aa).

Belongs to the MST(3)CGP family. As to expression, testis.

This is Male-specific sperm protein Mst84Dc (Mst84Dc) from Drosophila melanogaster (Fruit fly).